The chain runs to 249 residues: Uroplakin-3b-like protein 1 (249 aa).

A signal peptide spans Met-1–Gly-26. At Leu-27 to Val-194 the chain is on the extracellular side. Residues Asn-63, Asn-82, and Asn-133 are each glycosylated (N-linked (GlcNAc...) asparagine). The chain crosses the membrane as a helical span at residues Ile-195–Ile-215. Over Ser-216 to Ser-249 the chain is Cytoplasmic.

The protein belongs to the uroplakin-3 family.

It is found in the membrane. The sequence is that of Uroplakin-3b-like protein 1 from Mus musculus (Mouse).